Consider the following 375-residue polypeptide: Elongation factor Tu (375 aa).

The 196-residue stretch at Lys10–Glu205 folds into the tr-type G domain. Positions Gly19 to Thr26 are G1. Gly19 to Thr26 is a binding site for GTP. Thr26 lines the Mg(2+) pocket. Positions Gly60–Asn64 are G2. Residues Asp81 to Gly84 form a G3 region. GTP is bound by residues Asp81–His85 and Asn136–Asp139. The interval Asn136 to Asp139 is G4. Residues Ser173–Phe175 are G5.

This sequence belongs to the TRAFAC class translation factor GTPase superfamily. Classic translation factor GTPase family. EF-Tu/EF-1A subfamily. In terms of assembly, monomer.

Its subcellular location is the cytoplasm. The enzyme catalyses GTP + H2O = GDP + phosphate + H(+). Its function is as follows. GTP hydrolase that promotes the GTP-dependent binding of aminoacyl-tRNA to the A-site of ribosomes during protein biosynthesis. The protein is Elongation factor Tu (tuf) of Spirochaeta aurantia.